Consider the following 384-residue polypeptide: Dehydrogenase ALT3 (384 aa).

The protein belongs to the iron-containing alcohol dehydrogenase family. Fe cation is required as a cofactor.

It participates in mycotoxin biosynthesis. Functionally, dehydrogenase; part of the gene cluster that mediates the biosynthesis of the host-selective toxins (HSTs) AAL-toxins, sphinganine-analog mycotoxins responsible for Alternaria stem canker on tomato by the tomato pathotype. The biosynthesis starts with the polyketide synthase ALT1-catalyzed C-16 carbon chain assembly from one starter acetyl-CoA unit with malonyl-CoA extender units. ALT1 also selectively transfers methyl groups at the first and the third cycle of chain elongation for AAL toxin. The C-16 polyketide chain is released from the enzyme by a nucleophilic attack of a carbanion, which is derived from R-carbon of glycin by decarboxylation, on the carbonyl carbon of polyketide acyl chain. This step is probably catalyzed by a pyridoxal 5'-phosphate-dependent aminoacyl transferase ALT4. The respective functions of the other enzymes encoded by the cluster have still to be elucidated. The sphingosine N-acyltransferase-like protein ALT7 seems not to act as a resistance/self-tolerance factor against the toxin in the toxin biosynthetic gene cluster, contrary to what is expected. This chain is Dehydrogenase ALT3, found in Alternaria alternata (Alternaria rot fungus).